Consider the following 1281-residue polypeptide: Enterobactin synthase component F (1281 aa).

Positions 1–301 (MSQHLPLVAA…NVLPLGIHIA (301 aa)) are elongation/condensation. The segment at 486–891 (SYREMHEQVV…ALPDVKQAVT (406 aa)) is adenylation. The Carrier domain maps to 975–1050 (APKAGSETII…KLATIIDGEE (76 aa)). Residue S1010 is modified to O-(pantetheine 4'-phosphoryl)serine. Residues 1070–1281 (PTLFCFHPAS…GPIIRATLNR (212 aa)) are thioesterase. H1259 functions as the Proton acceptor; for thioesterase activity in the catalytic mechanism.

The protein belongs to the ATP-dependent AMP-binding enzyme family. EntF subfamily. In terms of assembly, proteins EntB, EntD, EntE and EntF are the component of the enterobactin synthase. Components probably do not form a stable complex. EntF acts as a catalytic monomer. Pantetheine 4'-phosphate serves as cofactor. 4'-phosphopantetheine is transferred from CoA to a specific serine of apo-EntF by EntD. Holo-EntF so formed is then acylated with seryl-AMP.

The protein resides in the cytoplasm. It catalyses the reaction 3 2,3-dihydroxybenzoate + 3 L-serine + 6 ATP = enterobactin + 6 AMP + 6 diphosphate + 4 H(+). The enzyme catalyses holo-[peptidyl-carrier protein] + L-serine + ATP = L-seryl-[peptidyl-carrier protein] + AMP + diphosphate. It functions in the pathway siderophore biosynthesis; enterobactin biosynthesis. Involved in the biosynthesis of the siderophore enterobactin (enterochelin), which is a macrocyclic trimeric lactone of N-(2,3-dihydroxybenzoyl)-serine. EntF catalyzes the activation of L-serine via ATP-dependent PPi exchange reaction to form seryladenylate. Activated L-serine is loaded onto the peptidyl carrier domain via a thioester linkage to the phosphopanthetheine moiety, forming seryl-S-Ppant-EntF. EntF acts then as the sole catalyst for the formation of the three amide and three ester linkages found in enterobactin, using seryladenylate and 2,3-dihydroxybenzoate-S-Ppant-EntB (DHB-S-Ppant-EntB) as substrates, via the formation of a DHB-Ser-S-Ppant-EntF intermediate. In Shigella flexneri, this protein is Enterobactin synthase component F (entF).